Here is a 295-residue protein sequence, read N- to C-terminus: Aquaporin-9 (295 aa).

Residues 1–24 (MPSEKDRAKKNLVQRLALKSCLAK) are Cytoplasmic-facing. A helical membrane pass occupies residues 25–43 (ETLSEFLGTFIMIVLGCGS). Residues 44–57 (IAQAVLSREKAGGI) lie on the Extracellular side of the membrane. A helical transmembrane segment spans residues 58-77 (ITINIGFATAVVMALYATFG). Topologically, residues 78–79 (VS) are cytoplasmic. The segment at residues 80-92 (GGHINPAVSFAMC) is an intramembrane region (discontinuously helical). The short motif at 84-86 (NPA) is the NPA 1 element. The Cytoplasmic portion of the chain corresponds to 93–98 (TFGRME). The helical transmembrane segment at 99–123 (WFKFPFYVGAQLLGAFVGAATVFGI) threads the bilayer. The Extracellular segment spans residues 124 to 160 (YYDGLMAFADGKLLITGENGTAFIFATYPKPFVSVPG). The chain crosses the membrane as a helical span at residues 161–178 (AFVDQVVSTMFLLLIVFA). Residues 179–190 (IFDSRNLGVPRG) are Cytoplasmic-facing. A helical membrane pass occupies residues 191 to 207 (LEPIVIGLLIIVISCSL). Topologically, residues 208–210 (GLN) are extracellular. The discontinuously helical intramembrane region spans 211 to 225 (SGCAMNPARDLSPRL). The NPA 2 signature appears at 216–218 (NPA). Residues 226-243 (FTALAGWGFEVFTFGNNF) are Extracellular-facing. A helical transmembrane segment spans residues 244–264 (WWIPVVGPMIGAVLGGLIYVL). Residues 265–295 (FIQMHHSNPDPEVKAEPAENNLEKHELSVIM) are Cytoplasmic-facing.

The protein belongs to the MIP/aquaporin (TC 1.A.8) family. As to quaternary structure, homotetramer; each monomer provides an independent glycerol/water pore.

The protein resides in the cell membrane. The protein localises to the basolateral cell membrane. The catalysed reaction is glycerol(in) = glycerol(out). The enzyme catalyses H2O(in) = H2O(out). It catalyses the reaction urea(in) = urea(out). It carries out the reaction (S)-lactate(in) = (S)-lactate(out). The catalysed reaction is NH4(+)(in) = NH4(+)(out). The enzyme catalyses uracil(in) = uracil(out). It catalyses the reaction adenine(out) = adenine(in). It carries out the reaction 3-hydroxybutanoate(in) = 3-hydroxybutanoate(out). The catalysed reaction is D-sorbitol(in) = D-sorbitol(out). The enzyme catalyses D-mannitol(in) = D-mannitol(out). It catalyses the reaction H2O2(out) = H2O2(in). It carries out the reaction arsenite(in) = arsenite(out). The catalysed reaction is selenite(in) = selenite(out). Aquaglyceroporins form homotetrameric transmembrane channels, with each monomer independently mediating glycerol and water transport across the plasma membrane along their osmotic gradient. AQP9 is the primary route for glycerol uptake in hepatocytes, supporting hepatic gluconeogenesis. It exhibits broad specificity and may transport various small, non-charged solutes, including carbamides, polyols, purines, and pyrimidines. AQP9 may also facilitate hepatic urea extrusion. Due to its permeability to lactate, AQP9 might participate in the astrocyte-to-neuron lactate shuttle, supplying neurons with energy. Additionally, AQP9 is permeable to arsenite, contributing to arsenic excretion by the liver and providing partial protection against arsenic toxicity. It is also permeable to H2O2 in vivo. Could also be permeable to ammonium. The protein is Aquaporin-9 of Mus musculus (Mouse).